The sequence spans 40 residues: MQKPSGKGLKYFAYGVAISAAGAILAEYVRDWMRKPKAKS.

The helical transmembrane segment at lysine 10 to valine 29 threads the bilayer.

The protein resides in the virion membrane. May interact with the viral DNA. The sequence is that of Protein P4 (IV) from Pseudoalteromonas phage PM2 (Bacteriophage PM2).